Reading from the N-terminus, the 423-residue chain is UPF0229 protein PST_0721 (423 aa).

The segment at 84–109 (AGERIPRPQGGGGGQGAGQASNSGEG) is disordered.

The protein belongs to the UPF0229 family.

This Stutzerimonas stutzeri (strain A1501) (Pseudomonas stutzeri) protein is UPF0229 protein PST_0721.